The chain runs to 105 residues: Small ribosomal subunit protein uS17 (105 aa).

The protein belongs to the universal ribosomal protein uS17 family. Part of the 30S ribosomal subunit. Contacts protein S12.

One of the primary rRNA binding proteins, it binds directly to 16S rRNA where it helps nucleate assembly of the platform and body of the 30S subunit by bringing together and stabilizing interactions between several different RNA helices. The combined cluster of proteins S8, S12 and S17 appears to hold together the shoulder and platform of the 30S subunit. The protein is Small ribosomal subunit protein uS17 of Thermus thermophilus (strain ATCC 27634 / DSM 579 / HB8).